The sequence spans 580 residues: F-box only protein 24 (580 aa).

Residues 36-82 (PISIQLFPPELVEHIISFLPVRDLVALGQTCRYFHEVCDAEGVWRRI) enclose the F-box domain. The stretch at 376–425 (GRIFMQGNNRYGQLGTGDKMDRGEPTQVRYLQRPITLWCGLNHSLVLSQS) is one RCC1 repeat.

As to quaternary structure, directly interacts with SKP1 and CUL1.

Functionally, substrate-recognition component of the SCF (SKP1-CUL1-F-box protein)-type E3 ubiquitin ligase complex. The protein is F-box only protein 24 (FBXO24) of Macaca fascicularis (Crab-eating macaque).